The primary structure comprises 570 residues: Interleukin-1 receptor accessory protein (570 aa).

A signal peptide spans 1–20; sequence MGLLWYLMSLSFYGILQSHA. Ig-like C2-type domains are found at residues 21–128, 139–230, and 243–348; these read SERC…VAFP, NSAM…RTVT, and PQIY…AKVK. At 21 to 367 the chain is on the extracellular side; that stretch reads SERCDDWGLD…VELACGFGAT (347 aa). 5 disulfides stabilise this stretch: Cys24/Cys122, Cys47/Cys114, Cys137/Cys181, Cys160/Cys212, and Cys266/Cys332. N-linked (GlcNAc...) asparagine glycosylation occurs at Asn57. The segment at 69–85 is essential for interaction with PTPRD; that stretch reads IWYWTRQDRDLEEPINF. N-linked (GlcNAc...) asparagine glycosylation is found at Asn107, Asn111, and Asn118. 3 N-linked (GlcNAc...) asparagine glycosylation sites follow: Asn196, Asn209, and Asn299. Residues 368–388 form a helical membrane-spanning segment; the sequence is VFLVVVLIVVYHVYWLEMVLF. The Cytoplasmic segment spans residues 389–570; the sequence is YRAHFGTDET…GLSYSSLKNV (182 aa). The region spanning 403–546 is the TIR domain; sequence KEYDIYVSYA…RFWKQLQVAM (144 aa). Glu482 is a catalytic residue. The segment at 550–570 is disordered; sequence KSPRWSSNDKQGLSYSSLKNV. Positions 553–570 are enriched in polar residues; it reads RWSSNDKQGLSYSSLKNV.

Belongs to the interleukin-1 receptor family. As to quaternary structure, the interleukin-36 receptor complex is a heterodimer of IL1RL2 and IL1RAP; the association is inhibited by IL36RN. The interleukin-1 receptor complex is a heterodimer of IL1R1 and IL1RAP. Associates with IL1R2 to form a non-signaling interleukin-1 receptor complex. Interacts with IL-33-bound IL1RL1 to form the minimal interleukin-33 signaling complex with a 1:1:1 stoichiometry. Interacts with KIT (independently of stimulation with KITLG/SCF). A mast cell-specific KITLG/SCF-induced interleukin-33 signaling complex contains IL1RL1, IL1RAP, KIT and MYD88. Interacts (via the first immunoglobilin domain) with PTPRD (via the third immunoglobilin domain); induces pre- and postsynaptic differentiation of neurons. As to expression, detected in lung, brain, spleen, thymus and liver. Expressed in brain endothelial cells, astrocytes, microglia and neurons. Isoform 3 is predominantly expressed in brain; expressed in hippocampal neurons.

The protein resides in the cell membrane. Its subcellular location is the secreted. The enzyme catalyses NAD(+) + H2O = ADP-D-ribose + nicotinamide + H(+). Its function is as follows. Coreceptor for IL1RL2 in the IL-36 signaling system. Coreceptor with IL1R1 in the IL-1 signaling system. Associates with IL1R1 bound to IL1B to form the high affinity interleukin-1 receptor complex which mediates interleukin-1-dependent activation of NF-kappa-B and other pathways. Signaling involves the recruitment of adapter molecules such as TOLLIP, MYD88, and IRAK1 or IRAK2 via the respective TIR domains of the receptor/coreceptor subunits. Recruits TOLLIP to the signaling complex. Does not bind to interleukin-1 alone; binding of IL1RN to IL1R1, prevents its association with IL1R1 to form a signaling complex. The cellular response is modulated through a non-signaling association with the membrane IL1R2 decoy receptor. Secreted forms (isoforms 2 and 3) associate with secreted ligand-bound IL1R2 and increase the affinity of secreted IL1R2 for IL1B; this complex formation may be the dominant mechanism for neutralization of IL1B by secreted/soluble receptors. Coreceptor for IL1RL1 in the IL-33 signaling system. Can bidirectionally induce pre- and postsynaptic differentiation of neurons by trans-synaptically binding to PTPRD. May play a role in IL1B-mediated costimulation of IFNG production from T-helper 1 (Th1) cells. Functionally, associates with secreted ligand-bound IL1R2 and increases the affinity of secreted IL1R2 for IL1B; this complex formation may be the dominant mechanism for neutralization of IL1B by secreted/soluble receptors. Enhances the ability of secreted IL1R1 to inhibit IL-33 signaling. In terms of biological role, required for Src phosphorylation by IL1B. Required for IL1B-potentiated NMDA-induced calcium influx in neurons acting in cooperation with IL1R1 isoform 2 to mediate Akt kinase activation. The chain is Interleukin-1 receptor accessory protein (Il1rap) from Mus musculus (Mouse).